A 908-amino-acid chain; its full sequence is Glutamate receptor ionotropic, kainate 2 (908 aa).

A signal peptide spans 1 to 31; that stretch reads MKIISPVLSNLVFSRSIKVLLCLLWIGYSQG. Residues 32–561 are Extracellular-facing; the sequence is TTHVLRFGGI…VFSFLNPLSP (530 aa). N67, N73, N275, N378, N412, N423, and N430 each carry an N-linked (GlcNAc...) asparagine glycan. C96 and C347 are joined by a disulfide. L-glutamate contacts are provided by P516, A518, and R523. An N-linked (GlcNAc...) asparagine glycan is attached at N546. The helical transmembrane segment at 562–582 threads the bilayer; that stretch reads DIWMYILLAYLGVSCVLFVIA. Residues 583–638 are Cytoplasmic-facing; the sequence is RFSPYEWYNPHPCNPDSDVVENNFTLLNSFWFGVGALMQQGSELMPKALSTRIVGG. Residues 639-659 traverse the membrane as a helical segment; it reads IWWFFTLIIISSYTANLAAFL. Over 660 to 819 the chain is Extracellular; it reads TVERMESPID…KEASALGVQN (160 aa). L-glutamate-binding residues include A689, T690, and E738. C750 and C804 are oxidised to a cystine. N751 carries an N-linked (GlcNAc...) asparagine glycan. Residues 820 to 840 traverse the membrane as a helical segment; sequence IGGIFIVLAAGLVLSVFVAVG. Residues 841–908 are Cytoplasmic-facing; that stretch reads EFLYKSKKNA…RRLPGKETMA (68 aa). S846 and S868 each carry phosphoserine; by PKC. K886 is covalently cross-linked (Glycyl lysine isopeptide (Lys-Gly) (interchain with G-Cter in SUMO1)).

This sequence belongs to the glutamate-gated ion channel (TC 1.A.10.1) family. GRIK2 subfamily. As to quaternary structure, homotetramer and heterotetramer with GRIK5. Tetramers may be formed by the dimerization of dimers. Assembles into a kainate-gated homomeric channel that does not bind AMPA. Can form functional heteromeric receptors with GRIK3. Forms a heteromeric complex with GRIK4 and GRIK5. Interacts with DLG4. Interacts (via C-terminus) with KLHL17 (via kelch repeats); the interaction targets GRIK2 for degradation via ubiquitin-proteasome pathway. Interacts with NETO2. Post-translationally, sumoylation mediates kainate receptor-mediated endocytosis and regulates synaptic transmission. Sumoylation is enhanced by PIAS3 and desumoylated by SENP1. In terms of processing, ubiquitinated. Ubiquitination regulates the GRIK2 levels at the synapse by leading kainate receptor degradation through proteasome. Phosphorylated by PKC at Ser-868 upon agonist activation, this directly enhance sumoylation. As to expression, expressed in the hippocampal mossy fiber synapses (at protein level). Most abundant in the cerebellum and the hypothalamus. Expressed in a proportion of dorsal root ganglion (DRG) neurons (13.6%); predominantly small diameter DRG neurons (75%) with the remainder expressed in medium diameter DRG neurons.

It localises to the cell membrane. The protein resides in the postsynaptic cell membrane. It catalyses the reaction Ca(2+)(in) = Ca(2+)(out). It carries out the reaction Na(+)(in) = Na(+)(out). Cold receptor activity activated by temperatures between 10-19 degrees Celsius. Ionotropic glutamate receptor that functions as a cation-permeable ligand-gated ion channel, gated by L-glutamate and the glutamatergic agonist kainic acid. L-glutamate acts as an excitatory neurotransmitter at many synapses in the central nervous system. Binding of the excitatory neurotransmitter L-glutamate induces a conformation change, leading to the opening of the cation channel, and thereby converts the chemical signal to an electrical impulse. The receptor then desensitizes rapidly and enters a transient inactive state, characterized by the presence of bound agonist. Modulates cell surface expression of NETO2. In association with GRIK3, involved in presynaptic facilitation of glutamate release at hippocampal mossy fiber synapses. In terms of biological role, independent of its ionotropic glutamate receptor activity, acts as a thermoreceptor conferring sensitivity to cold temperatures. Functions in dorsal root ganglion neurons. Its function is as follows. Ionotropic glutamate receptor that functions as a cation-permeable ligand-gated ion channel, gated by L-glutamate and the glutamatergic agonist kainic acid. This is Glutamate receptor ionotropic, kainate 2 (Grik2) from Mus musculus (Mouse).